A 449-amino-acid chain; its full sequence is MKHITIIGAGLAGTLCGLYLARRGYEVELFESRPDIRNSPTDYGRSINLALSCRGITALKAMNLLSEVNKIMVPMRARAIHEANGEIHYQPFGRHIDEYINAISRSDLNALLLNKAKLCPNIKLHFNMKLHSLDIHNKKIKFENKNGDFVEASYHRLIGADGAPSHVRDMLKNEGIVSASRDFLSHGYKELSISKKHTKGMAREHLHLWPRDSFMLLGNPNPDDSITGSLFLANEGKDSFAELNNEEKLHLFFKTQFPDAYAAMPNLVQEFFGNPTGHLSTIQCSPWYYKDECLLIGDAAHGIIPFFGQGMNSAFEDCRILDELLDEYQDDWSRVNSVFYEHRKVNTDAIAKMSMDNYHEIHSDIRNPKFILQKQIERELMLRYPEHYVSMHVLVMFTNTPYAKAMAIGELQSGLLEQICFPITDIKELNWQEVEKLLSLYDKKLAKII.

It belongs to the aromatic-ring hydroxylase family. KMO subfamily. The cofactor is FAD.

The catalysed reaction is L-kynurenine + NADPH + O2 + H(+) = 3-hydroxy-L-kynurenine + NADP(+) + H2O. It functions in the pathway cofactor biosynthesis; NAD(+) biosynthesis; quinolinate from L-kynurenine: step 1/3. In terms of biological role, catalyzes the hydroxylation of L-kynurenine (L-Kyn) to form 3-hydroxy-L-kynurenine (L-3OHKyn). Required for synthesis of quinolinic acid. This Legionella pneumophila (strain Lens) protein is Kynurenine 3-monooxygenase.